A 179-amino-acid polypeptide reads, in one-letter code: Inner membrane-spanning protein YciB (179 aa).

A run of 5 helical transmembrane segments spans residues I22–I42, M50–N70, W76–M96, I121–M141, and F149–I169.

The protein belongs to the YciB family.

The protein resides in the cell inner membrane. In terms of biological role, plays a role in cell envelope biogenesis, maintenance of cell envelope integrity and membrane homeostasis. The protein is Inner membrane-spanning protein YciB of Enterobacter sp. (strain 638).